The primary structure comprises 1046 residues: Hemoglobin-haptoglobin-binding protein A (1046 aa).

The first 24 residues, 1–24 (MTNFRLNLLAYSVMLGLTAGVAYA), serve as a signal peptide directing secretion. 4 repeat units span residues 26 to 29 (QPTN), 30 to 33 (QPTN), 34 to 37 (QPTN), and 38 to 41 (QPTN). Positions 26-41 (QPTNQPTNQPTNQPTN) are 4 X 4 AA tandem repeats of Q-P-T-N. Positions 51–58 (EQINVLGS) match the TonB box motif. The TBDR plug domain occupies 61–188 (HNDNTPPKIA…LGGSVSFDTK (128 aa)). In terms of domain architecture, TBDR beta-barrel spans 196–1046 (NKNYYASYKR…NYRMSVQFEF (851 aa)). The short motif at 1029 to 1046 (NRFYAPGRNYRMSVQFEF) is the TonB C-terminal box element.

Belongs to the TonB-dependent receptor family. Hemoglobin/haptoglobin binding protein subfamily.

It is found in the cell outer membrane. Its function is as follows. Acts as a receptor for the hemoglobin/haptoglobin complex of the human host and is required for heme uptake. Does not bind hemoglobin alone. This Haemophilus influenzae protein is Hemoglobin-haptoglobin-binding protein A (hhuA).